The primary structure comprises 604 residues: Baculoviral IAP repeat-containing protein 3 (604 aa).

3 BIR repeats span residues 29–96 (ELYR…CRFV), 169–235 (ENAR…CPFI), and 255–322 (HAAR…CEYL). 4 residues coordinate Zn(2+): C292, C295, H312, and C319. The 91-residue stretch at 439–529 (KESNDLLLIR…VLYEHLFVQQ (91 aa)) folds into the CARD domain. The RING-type zinc finger occupies 557-592 (CKVCMDKEVSIVFIPCGHLVVCKDCAPSLRKCPICR).

The protein belongs to the IAP family. Interacts with PRSS25; interaction inhibits apoptotic suppressor activity. The BIR motifs region interacts with TNF receptor associated factors 1 and 2 (TRAF1 and TRAF2) to form a heteromeric complex, which is then recruited to the tumor necrosis factor receptor 2 (TNFR2). Interaction with TRAF2 is required for ubiquitination of IKBKE, degradation of NFKBIA and activation of NF-kappa-B. Interacts with RIP1, RIP2, RIP3, RIP4 and USP19. In terms of processing, auto-ubiquitinated and degraded by the proteasome in apoptotic cells. In terms of tissue distribution, highly expressed in fetal lung, and kidney. In the adult, expression is mainly seen in lymphoid tissues, including spleen, thymus and peripheral blood lymphocytes.

Its subcellular location is the cytoplasm. The protein localises to the nucleus. It carries out the reaction S-ubiquitinyl-[E2 ubiquitin-conjugating enzyme]-L-cysteine + [acceptor protein]-L-lysine = [E2 ubiquitin-conjugating enzyme]-L-cysteine + N(6)-ubiquitinyl-[acceptor protein]-L-lysine.. With respect to regulation, USP19 regulates the stability of BIRC3/c-IAP2 by preventing its ubiquitination. In terms of biological role, multi-functional protein which regulates not only caspases and apoptosis, but also modulates inflammatory signaling and immunity, mitogenic kinase signaling and cell proliferation, as well as cell invasion and metastasis. Acts as an E3 ubiquitin-protein ligase regulating NF-kappa-B signaling and regulates both canonical and non-canonical NF-kappa-B signaling by acting in opposite directions: acts as a positive regulator of the canonical pathway and suppresses constitutive activation of non-canonical NF-kappa-B signaling. The target proteins for its E3 ubiquitin-protein ligase activity include: RIPK1, RIPK2, RIPK3, RIPK4, CASP3, CASP7, CASP8, IKBKE, TRAF1, and BCL10. Acts as an important regulator of innate immune signaling via regulation of Toll-like receptors (TLRs), Nodlike receptors (NLRs) and RIG-I like receptors (RLRs), collectively referred to as pattern recognition receptors (PRRs). Protects cells from spontaneous formation of the ripoptosome, a large multi-protein complex that has the capability to kill cancer cells in a caspase-dependent and caspase-independent manner. Suppresses ripoptosome formation by ubiquitinating RIPK1 and CASP8. The chain is Baculoviral IAP repeat-containing protein 3 (BIRC3) from Homo sapiens (Human).